The following is a 205-amino-acid chain: MWLLPALLLLCLSGCLSLKGPGSVTGTAGDSLTVWCQYESMYKGYNKYWCRGQYDTSCESIVETKGEEKVERNGRVSIRDHPEALAFTVTMQNLNEDDAGSYWCKIQTVWVLDSWSRDPSDLVRVYVSPAITTPRRTTHPATPPIFLVVNPGRNLSTGEVLTQNSGFRLSSPHFLLVVLLKLPLLLSMLGAVFWVNRPQWAPPGR.

An N-terminal signal peptide occupies residues 1–17 (MWLLPALLLLCLSGCLS). Residues 18-120 (LKGPGSVTGT…VLDSWSRDPS (103 aa)) enclose the Ig-like V-type domain. Over 18–173 (LKGPGSVTGT…NSGFRLSSPH (156 aa)) the chain is Extracellular. The cysteines at positions 36 and 104 are disulfide-linked. Asn-154 carries N-linked (GlcNAc...) asparagine glycosylation. The helical transmembrane segment at 174-194 (FLLVVLLKLPLLLSMLGAVFW) threads the bilayer. Topologically, residues 195–205 (VNRPQWAPPGR) are cytoplasmic.

The protein belongs to the CD300 family. As to quaternary structure, interacts with TYROBP. Post-translationally, N-glycosylated. In terms of tissue distribution, present on the surface of mature hematopoietic cells of the monocyte and myeloid lineages (at protein level).

The protein resides in the cell membrane. Probably acts as an activating receptor. The protein is CMRF35-like molecule 2 (CD300E) of Homo sapiens (Human).